The chain runs to 411 residues: Methyl-CpG-binding domain protein 2 (411 aa).

The tract at residues 1–149 (MRAHPGGGRC…GPRATESGKR (149 aa)) is required for interaction with DHX9 and PRMT5. The interval 1–158 (MRAHPGGGRC…RMDCPALPPG (158 aa)) is disordered. A compositionally biased stretch (basic residues) spans 77 to 95 (GRGRGRGRGRGRGRGRGRG). The segment covering 98–121 (PSGGSGLGGDGGGCGGGGSGGGGA) has biased composition (gly residues). The 69-residue stretch at 145–213 (ESGKRMDCPA…SSFDFRTGKM (69 aa)) folds into the MBD domain. S181 is subject to Phosphoserine. Residues 214-241 (MPSKLQKNKQRLRNDPLNQNKGKPDLNT) are disordered. Over residues 229 to 241 (PLNQNKGKPDLNT) the composition is skewed to polar residues. Residue S407 is modified to Phosphoserine.

In terms of assembly, heterodimer with MBD3 (via N-terminus). Component of the MeCP1 complex that contains HDAC1 and HDAC2. Component of the nucleosome remodeling and deacetylase (NuRD) repressor complex, composed of core proteins MTA1, MTA2, MTA3, RBBP4, RBBP7, HDAC1, HDAC2, MBD2, MBD3, and peripherally associated proteins CDK2AP1, CDK2AP2, GATAD2A, GATAD2B, CHD3, CHD4 and CHD5. The exact stoichiometry of the NuRD complex is unknown, and some subunits such as MBD2 and MBD3, GATAD2A and GATAD2B, and CHD3, CHD4 and CHD5 define mutually exclusive NuRD complexes. Interacts with CDK2AP1. Interacts with DHX9. Interacts with DNMT1. Interacts with GATAD2A/p66-alpha. Interacts with GATAD2B/p66-beta. Interacts with GPN1. Interacts with MIZF. Interacts with PRMT5. Interacts with SIN3A. Interacts with SPHK2. In terms of tissue distribution, highly expressed in brain, heart, kidney, stomach, testis and placenta.

The protein resides in the nucleus. It is found in the chromosome. In terms of biological role, binds CpG islands in promoters where the DNA is methylated at position 5 of cytosine within CpG dinucleotides. Binds hemimethylated DNA as well. Recruits histone deacetylases and DNA methyltransferases to chromatin. Acts as a component of the histone deacetylase NuRD complex which participates in the remodeling of chromatin. Acts as a transcriptional repressor and plays a role in gene silencing. Functions as a scaffold protein, targeting GATAD2A and GATAD2B to chromatin to promote repression. May enhance the activation of some unmethylated cAMP-responsive promoters. This Homo sapiens (Human) protein is Methyl-CpG-binding domain protein 2.